The chain runs to 906 residues: Disintegrin and metalloproteinase domain-containing protein 22 (906 aa).

Positions 1–25 (MQAAVAVSVPFLLLCVLGTCPPARC) are cleaved as a signal peptide. Residues 26 to 222 (GQAGDASLME…KFILKPRPKR (197 aa)) constitute a propeptide that is removed on maturation. Asn-175 carries N-linked (GlcNAc...) asparagine glycosylation. Over 223-736 (SKRQLRRYPR…LSGNGVAGTN (514 aa)) the chain is Extracellular. A Peptidase M12B domain is found at 239-438 (KYIELMIVND…GGGACLFNKP (200 aa)). Disulfide bonds link Cys-349/Cys-433, Cys-392/Cys-417, Cys-394/Cys-401, Cys-447/Cys-477, Cys-458/Cys-474, Cys-460/Cys-466, Cys-473/Cys-494, Cys-485/Cys-491, Cys-490/Cys-516, Cys-503/Cys-523, Cys-510/Cys-542, Cys-535/Cys-547, Cys-554/Cys-605, Cys-569/Cys-635, Cys-583/Cys-593, Cys-600/Cys-663, and Cys-657/Cys-668. Residues 444–531 (PPECGNGFIE…QCAPNIHKMD (88 aa)) enclose the Disintegrin domain. N-linked (GlcNAc...) asparagine glycosylation occurs at Asn-519. N-linked (GlcNAc...) asparagine glycosylation is present at Asn-634. Residue Asn-675 is glycosylated (N-linked (GlcNAc...) asparagine). One can recognise an EGF-like domain in the interval 675 to 712 (NFSTCLSSKEGTICSGNGVCSNELKCVCNRHWIGSDCN). 3 disulfide bridges follow: Cys-679–Cys-694, Cys-688–Cys-700, and Cys-702–Cys-711. A helical membrane pass occupies residues 737 to 757 (IIIGIIAGTILVLALILGITA). Over 758 to 906 (WGYKNYREQR…QSARLWETSI (149 aa)) the chain is Cytoplasmic. The disordered stretch occupies residues 785 to 906 (YSDIPPGVST…QSARLWETSI (122 aa)). Residues 793–810 (STNSASSSKKRSNGLSHS) are compositionally biased toward low complexity. Ser-810 is modified (phosphoserine). Positions 811–829 (WSERIPDTKHISDICENGR) are enriched in basic and acidic residues. Residue Ser-834 is modified to Phosphoserine. The span at 842–853 (NKKKIRGKRFRP) shows a compositional bias: basic residues. Residues Ser-857, Ser-862, Ser-866, and Ser-870 each carry the phosphoserine modification. Positions 862–877 (SPAKSPSSSTGSIASS) are enriched in low complexity.

As to quaternary structure, interacts with LGI1. Interacts with DLG4/PSD95. Also binds LGI4. Interacts with KCNA2 and DLG2. Interacts with ADAM11. Interacts (via C-terminus) with YWHAB/14-3-3 beta. Interacts (via C-terminus) with YWHAZ/14-3-3 zeta. The precursor is cleaved by a furin endopeptidase. In terms of tissue distribution, highly expressed in the brain and in some high-grade but not low-grade gliomas. Detected slightly or not at all in other tissues.

The protein resides in the cell membrane. The protein localises to the cell projection. It is found in the axon. Probable ligand for integrin in the brain. This is a non catalytic metalloprotease-like protein. Involved in regulation of cell adhesion and spreading and in inhibition of cell proliferation. Neuronal receptor for LGI1. This chain is Disintegrin and metalloproteinase domain-containing protein 22 (ADAM22), found in Homo sapiens (Human).